A 737-amino-acid chain; its full sequence is Relaxin receptor 2 (737 aa).

Residues 1-399 (MWLLLHVILL…SSSEDLLANG (399 aa)) are Extracellular-facing. Positions 27–64 (LCPKGYFPCGNLTKCLPRAFHCDGVDDCGNGADEDNCG) constitute an LDL-receptor class A domain. Cystine bridges form between cysteine 28-cysteine 41, cysteine 35-cysteine 54, and cysteine 48-cysteine 63. An N-linked (GlcNAc...) asparagine glycan is attached at asparagine 37. The N-linked (GlcNAc...) asparagine glycan is linked to asparagine 121. 10 LRR repeats span residues 121 to 142 (NVTL…VFSR), 145 to 166 (ELRK…AFLG), 169 to 190 (NLQI…IFKD), 193 to 214 (QLAW…SFMG), 217 to 238 (SLFF…LCAQ), 241 to 262 (QLNW…TFLT), 265 to 286 (SLTV…TFSS), 289 to 310 (NLGE…LFSD), 313 to 334 (LLQK…QFGS), and 337 to 358 (QLQS…MFQP). An N-linked (GlcNAc...) asparagine glycan is attached at asparagine 257. N-linked (GlcNAc...) asparagine glycosylation is found at asparagine 318, asparagine 350, and asparagine 361. The chain crosses the membrane as a helical span at residues 400-420 (ILRVSVWVIAFITCVGNFLVI). Residues 421 to 438 (AVRSLIKAENTTHAMSIK) are Cytoplasmic-facing. The helical transmembrane segment at 439–459 (ILCCADCLMGVYLFSVGVFDI) threads the bilayer. Residues 460–478 (KYRGQYQKYALLWMESVPC) lie on the Extracellular side of the membrane. A disulfide bond links cysteine 478 and cysteine 556. Residues 479 to 501 (RLLGFLATLSTEVSVLLLTFLTL) form a helical membrane-spanning segment. The Cytoplasmic segment spans residues 502-520 (EKFLVIVFPFSNLRLGKRQ). Residues 521-541 (TAVALASIWVVGFLIAAVPFT) traverse the membrane as a helical segment. Residues 542–575 (REDYFGNFYGKNGVCFPLHYDQAEDFGSRGYSLG) are Extracellular-facing. Residues 576 to 596 (IFLGVNLLAFLVIVISYVTMF) form a helical membrane-spanning segment. Residues 597–622 (CSIHKTALQTAEVRSHIGKEVAVANR) are Cytoplasmic-facing. The chain crosses the membrane as a helical span at residues 623–643 (FFFIVFSDAICWIPVFVVKIL). Residues 644-653 (SLLQVEIPGT) lie on the Extracellular side of the membrane. The helical transmembrane segment at 654 to 674 (ITSWIVVFFLPVNSALNPILY) threads the bilayer. Topologically, residues 675–737 (TLTTSFFKDK…GDSIMKPVSP (63 aa)) are cytoplasmic.

This sequence belongs to the G-protein coupled receptor 1 family. In terms of tissue distribution, expressed in embryonic and adult gonads of males and females, as well in male gubernarculum. Expressed also in brain. Not detected in kidney, spleen and heart.

Its subcellular location is the cell membrane. In terms of biological role, receptor for relaxin. The activity of this receptor is mediated by G proteins leading to stimulation of adenylate cyclase and an increase of cAMP. May also be a receptor for Leydig insulin-like peptide (INSL3). The polypeptide is Relaxin receptor 2 (Rxfp2) (Mus musculus (Mouse)).